Here is a 1409-residue protein sequence, read N- to C-terminus: DNA-directed RNA polymerase subunit beta' (1409 aa).

Zn(2+) is bound by residues C72, C74, C87, and C90. Mg(2+)-binding residues include D462, D464, and D466. Zn(2+)-binding residues include C816, C890, C897, and C900.

The protein belongs to the RNA polymerase beta' chain family. As to quaternary structure, the RNAP catalytic core consists of 2 alpha, 1 beta, 1 beta' and 1 omega subunit. When a sigma factor is associated with the core the holoenzyme is formed, which can initiate transcription. Mg(2+) is required as a cofactor. Zn(2+) serves as cofactor.

The enzyme catalyses RNA(n) + a ribonucleoside 5'-triphosphate = RNA(n+1) + diphosphate. In terms of biological role, DNA-dependent RNA polymerase catalyzes the transcription of DNA into RNA using the four ribonucleoside triphosphates as substrates. This Aromatoleum aromaticum (strain DSM 19018 / LMG 30748 / EbN1) (Azoarcus sp. (strain EbN1)) protein is DNA-directed RNA polymerase subunit beta'.